Consider the following 314-residue polypeptide: Aspartate carbamoyltransferase catalytic subunit (314 aa).

Carbamoyl phosphate contacts are provided by arginine 58 and threonine 59. Lysine 86 contributes to the L-aspartate binding site. Residues arginine 108, histidine 136, and glutamine 139 each contribute to the carbamoyl phosphate site. L-aspartate contacts are provided by arginine 169 and arginine 223. Residues glycine 264 and proline 265 each coordinate carbamoyl phosphate.

It belongs to the aspartate/ornithine carbamoyltransferase superfamily. ATCase family. As to quaternary structure, heterododecamer (2C3:3R2) of six catalytic PyrB chains organized as two trimers (C3), and six regulatory PyrI chains organized as three dimers (R2).

It catalyses the reaction carbamoyl phosphate + L-aspartate = N-carbamoyl-L-aspartate + phosphate + H(+). Its pathway is pyrimidine metabolism; UMP biosynthesis via de novo pathway; (S)-dihydroorotate from bicarbonate: step 2/3. Its function is as follows. Catalyzes the condensation of carbamoyl phosphate and aspartate to form carbamoyl aspartate and inorganic phosphate, the committed step in the de novo pyrimidine nucleotide biosynthesis pathway. In Opitutus terrae (strain DSM 11246 / JCM 15787 / PB90-1), this protein is Aspartate carbamoyltransferase catalytic subunit.